A 184-amino-acid chain; its full sequence is Cell number regulator 5 (184 aa).

The chain crosses the membrane as a helical span at residues 91-111 (MLWGLLTSLCCVFTGGLVLAV). Positions 162–184 (RTGSGSSPAPNVTPPPVQTMDEL) are disordered.

This sequence belongs to the cornifelin family. In terms of tissue distribution, expressed in roots, leaves, stalks, immature ears, endosperm and pollen.

It localises to the membrane. The protein is Cell number regulator 5 (CNR5) of Zea mays (Maize).